Reading from the N-terminus, the 536-residue chain is T-complex protein 1 subunit delta (536 aa).

Positions 1–15 (MPEGKATSSASNTGK) are enriched in polar residues. Positions 1-26 (MPEGKATSSASNTGKNKGGAYQDRDK) are disordered. Gly-50 contributes to the ADP binding site. An ATP-binding site is contributed by Gly-50. Mg(2+) is bound at residue Asp-101. ADP is bound by residues Gly-102, Thr-103, Thr-104, Ser-105, Ser-170, Lys-171, Gly-422, and Gln-507. ATP contacts are provided by Gly-102 and Thr-103. Lys-171 contributes to the ATP binding site.

It belongs to the TCP-1 chaperonin family. In terms of assembly, component of the chaperonin-containing T-complex (TRiC), a hexadecamer composed of two identical back-to-back stacked rings enclosing a protein folding chamber. Each ring is made up of eight different subunits: TCP1/CCT1, CCT2, CCT3, CCT4, CCT5, CCT6A/CCT6, CCT7, CCT8.

It localises to the cytoplasm. It carries out the reaction ATP + H2O = ADP + phosphate + H(+). Component of the chaperonin-containing T-complex (TRiC), a molecular chaperone complex that assists the folding of actin, tubulin and other proteins upon ATP hydrolysis. The sequence is that of T-complex protein 1 subunit delta (cct4) from Takifugu rubripes (Japanese pufferfish).